Here is a 206-residue protein sequence, read N- to C-terminus: Transcription factor BTF3 (206 aa).

The disordered stretch occupies residues 1–42 (MRRTGAPAQADSRGRGRARGGCPGGEATLSQPPPRGGTRGQE). Arg19 carries the omega-N-methylarginine modification. Position 30 is a phosphoserine (Ser30). N6-methyllysine is present on residues Lys46 and Lys54. The region spanning 82–147 (TADDKKLQFS…AETKQLTEML (66 aa)) is the NAC-A/B domain. Residue Thr160 is modified to Phosphothreonine. The segment at 170-206 (PKQSVDGKAPLATGEDDDDEVPDLVENFDEASKNEAN) is disordered. Ser173 is modified (phosphoserine). The segment covering 183–198 (GEDDDDEVPDLVENFD) has biased composition (acidic residues).

Belongs to the NAC-beta family. In terms of assembly, part of the nascent polypeptide-associated complex (NAC), which is a heterodimer of NACA and BTF3 (via NAC-A/B domains). NAC associates with ribosomes through the BTF3/NACB subunit. Both subunits can contact nascent polypeptide chains.

The protein resides in the cytoplasm. It is found in the nucleus. In terms of biological role, when associated with NACA, prevents inappropriate targeting of non-secretory polypeptides to the endoplasmic reticulum (ER). Binds to nascent polypeptide chains as they emerge from the ribosome and blocks their interaction with the signal recognition particle (SRP), which normally targets nascent secretory peptides to the ER. BTF3 is also a general transcription factor that can form a stable complex with RNA polymerase II. Required for the initiation of transcription. This chain is Transcription factor BTF3 (BTF3), found in Homo sapiens (Human).